Here is a 723-residue protein sequence, read N- to C-terminus: Nuclear intron maturase 3, mitochondrial (723 aa).

The transit peptide at 1–26 (MVLRLRVHSFYNRGISFLVSSSLRNL) directs the protein to the mitochondrion. The segment at 532–597 (VSAPEELVRK…HYTKDLRVSD (66 aa)) is intron maturase type-2; degenerate. Residues 646–700 (CAASFCERSDTIMHRVHLLQNRLHINPLDEEKWVPGMGTIHSALNRKCLPLCSTH) form a THAP-type zinc finger.

It belongs to the plant nuclear intron maturase (nMat) family.

The protein resides in the mitochondrion. Nuclear-encoded maturase required for splicing of group-II introns in mitochondria. Necessary for mitochondrial biogenesis during early developmental stages. This Arabidopsis thaliana (Mouse-ear cress) protein is Nuclear intron maturase 3, mitochondrial.